Reading from the N-terminus, the 292-residue chain is Trimeric intracellular cation channel type B (292 aa).

At 1-16 (MEYPWDDLTLAFSRTS) the chain is on the lumenal side. A helical membrane pass occupies residues 17-34 (MFPFFDIAHYLVSVMALK). Residues 35 to 47 (QRPGAVAAAWNNP) are Cytoplasmic-facing. Residues 48-69 (LASWLSAMLHCFGGGILSCMLL) form a helical membrane-spanning segment. Topologically, residues 70–82 (AESPLKFLTNHTN) are lumenal. The helical transmembrane segment at 83-100 (ILLASSIWYIVFFCPRDL) threads the bilayer. The Cytoplasmic segment spans residues 101 to 103 (VSQ). The helical transmembrane segment at 104-122 (GYSYQPIQFLAAGMKEVTR) threads the bilayer. 2 residues coordinate a 1,2-diacyl-sn-glycero-3-phospho-(1D-myo-inositol-4,5-bisphosphate): lysine 118 and arginine 122. The Lumenal portion of the chain corresponds to 123–140 (TWKIVGGVSDANSYYRNA). Residues 141–158 (WIVMIVVGWARGAGGAVV) form a helical membrane-spanning segment. Topologically, residues 159-178 (TACEQLLKGDWKPEGDEWLK) are cytoplasmic. The chain crosses the membrane as a helical span at residues 179–195 (MSFPCKITLLGSIMFTF). The Lumenal segment spans residues 196–206 (QHTRHLAISKH). A helical membrane pass occupies residues 207-225 (DLMFLYTIFLVTIKVTMMM). At 226-292 (TKDTAVTLTP…GAKRHAKKED (67 aa)) the chain is on the cytoplasmic side. Positions 248–292 (RQQQQFSSSEKKTEVKPSSNGSASSASKRGAEPSGGAKRHAKKED) are disordered. Residues 265–274 (SSNGSASSAS) show a composition bias toward low complexity.

It belongs to the TMEM38 family. Homotrimer; conformation seems to be controled by binding to diacylglycerol (DAG). In terms of tissue distribution, widely expressed.

It is found in the endoplasmic reticulum membrane. The catalysed reaction is K(+)(in) = K(+)(out). Its activity is regulated as follows. Channel activity is activated by increased cytosolic Ca(2+) levels and blocked by luminal high Ca(2+) levels. Intracellular monovalent cation channel required for maintenance of rapid intracellular calcium release. Acts as a potassium counter-ion channel that functions in synchronization with calcium release from intracellular stores. Activated by increased cytosolic Ca(2+) levels. The polypeptide is Trimeric intracellular cation channel type B (Tmem38b) (Mus musculus (Mouse)).